Reading from the N-terminus, the 594-residue chain is UvrABC system protein C (594 aa).

In terms of domain architecture, GIY-YIG spans 14–91 (DQPGCYLMKD…IKKYDPKYNI (78 aa)). Positions 196–231 (KEIRSELETKMYEASEKLEFERAKELRDQIAHIDAI) constitute a UVR domain.

It belongs to the UvrC family. As to quaternary structure, interacts with UvrB in an incision complex.

It localises to the cytoplasm. Its function is as follows. The UvrABC repair system catalyzes the recognition and processing of DNA lesions. UvrC both incises the 5' and 3' sides of the lesion. The N-terminal half is responsible for the 3' incision and the C-terminal half is responsible for the 5' incision. In Bacillus mycoides (strain KBAB4) (Bacillus weihenstephanensis), this protein is UvrABC system protein C.